The chain runs to 382 residues: uncharacterized protein (382 aa).

Transmembrane regions (helical) follow at residues V8–L28, M45–I65, Y75–W95, F102–S122, L131–S151, L157–F177, L204–P224, G231–G251, V270–P290, A291–C311, A325–M345, and S349–L369.

It belongs to the major facilitator superfamily. YcaD (TC 2.A.1.26) family.

The protein resides in the cell inner membrane. This is an uncharacterized protein from Salmonella agona (strain SL483).